The sequence spans 332 residues: Transaldolase (332 aa).

Catalysis depends on K136, which acts as the Schiff-base intermediate with substrate.

This sequence belongs to the transaldolase family. Type 1 subfamily.

It is found in the cytoplasm. It carries out the reaction D-sedoheptulose 7-phosphate + D-glyceraldehyde 3-phosphate = D-erythrose 4-phosphate + beta-D-fructose 6-phosphate. It participates in carbohydrate degradation; pentose phosphate pathway; D-glyceraldehyde 3-phosphate and beta-D-fructose 6-phosphate from D-ribose 5-phosphate and D-xylulose 5-phosphate (non-oxidative stage): step 2/3. Functionally, transaldolase is important for the balance of metabolites in the pentose-phosphate pathway. This chain is Transaldolase, found in Trichormus variabilis (strain ATCC 29413 / PCC 7937) (Anabaena variabilis).